Reading from the N-terminus, the 351-residue chain is D-alanine--D-alanine ligase (351 aa).

The ATP-grasp domain maps to lysine 141–glutamate 349. Glutamate 176–glutamate 231 contributes to the ATP binding site. The Mg(2+) site is built by aspartate 302, glutamate 316, and asparagine 318.

This sequence belongs to the D-alanine--D-alanine ligase family. It depends on Mg(2+) as a cofactor. Requires Mn(2+) as cofactor.

The protein localises to the cytoplasm. It catalyses the reaction 2 D-alanine + ATP = D-alanyl-D-alanine + ADP + phosphate + H(+). Its pathway is cell wall biogenesis; peptidoglycan biosynthesis. Its function is as follows. Cell wall formation. In Prochlorococcus marinus (strain SARG / CCMP1375 / SS120), this protein is D-alanine--D-alanine ligase.